Here is a 377-residue protein sequence, read N- to C-terminus: UPF0754 membrane protein GTNG_0550 (377 aa).

The next 2 membrane-spanning stretches (helical) occupy residues 7–27 and 357–377; these read LLFM…IAIV and YLGA…GLWL.

It belongs to the UPF0754 family.

The protein resides in the cell membrane. This Geobacillus thermodenitrificans (strain NG80-2) protein is UPF0754 membrane protein GTNG_0550.